A 429-amino-acid polypeptide reads, in one-letter code: Enolase (429 aa).

Q162 serves as a coordination point for (2R)-2-phosphoglycerate. The active-site Proton donor is E204. Residues D241, E283, and D310 each coordinate Mg(2+). (2R)-2-phosphoglycerate contacts are provided by K335, R364, S365, and K386. Residue K335 is the Proton acceptor of the active site.

This sequence belongs to the enolase family. It depends on Mg(2+) as a cofactor.

The protein localises to the cytoplasm. Its subcellular location is the secreted. The protein resides in the cell surface. It catalyses the reaction (2R)-2-phosphoglycerate = phosphoenolpyruvate + H2O. It participates in carbohydrate degradation; glycolysis; pyruvate from D-glyceraldehyde 3-phosphate: step 4/5. Its function is as follows. Catalyzes the reversible conversion of 2-phosphoglycerate (2-PG) into phosphoenolpyruvate (PEP). It is essential for the degradation of carbohydrates via glycolysis. The sequence is that of Enolase from Mycolicibacterium vanbaalenii (strain DSM 7251 / JCM 13017 / BCRC 16820 / KCTC 9966 / NRRL B-24157 / PYR-1) (Mycobacterium vanbaalenii).